The sequence spans 255 residues: ATP synthase subunit a (255 aa).

Residues 1–6 constitute a propeptide, removed in mature form; sequence MNFIIN. The next 5 helical transmembrane spans lie at 32-52, 91-111, 121-141, 159-200, and 219-251; these read LTSFSIYSIAVVALILGFSIL, LFPFMFSLFMYILIANVVSLV, LIWTIGLSVAIWIGCTLTGLA, PLVP…LAGL, and LSILLGIVALESAIAFIQAIVFTILTCSYIKDA.

As to quaternary structure, F-type ATP synthases have 2 components, the catalytic core F(1) and the membrane-embedded component F(0), linked together by a central stalk and a peripheral stalk. The central stalk, also called rotor shaft, is often seen as part of F(1). The peripheral stalk is seen as part of F(0). F(0) contains the membrane channel next to the rotor. F-type ATP synthases form dimers but each monomer functions independently in ATP generation. The dimer consists of 17 different polypeptides: ATP1 (subunit alpha, 3 molecules per monomer, part of F(1)), ATP2 (subunit beta, 3 copies per monomer, part of F(1)), ATP3 (subunit gamma, part of the central stalk), ATP4 (subunit b, part of the peripheral stalk), ATP5/OSCP (subunit 5/OSCP, part of the peripheral stalk), ATP6 (subunit a, part of the peripheral stalk), ATP7 (subunit d, part of the peripheral stalk), ATP8 (subunit 8, part of the peripheral stalk), OLI1 (subunit c, part of the rotor, 10 molecules per monomer), ATP14 (subunit h, part of the peripheral stalk), ATP15 (subunit epsilon, part of the central stalk), ATP16 (subunit delta, part of the central stalk), ATP17 (subunit f, part of the peripheral stalk), ATP18 (subunit i/j, part of the peripheral stalk), ATP19 (subunit k, dimer-specific, at interface between monomers), ATP20 (subunit g, at interface between monomers), TIM11 (subunit e, at interface between monomers).

It is found in the mitochondrion inner membrane. Mitochondrial membrane ATP synthase (F(1)F(0) ATP synthase or Complex V) produces ATP from ADP in the presence of a proton gradient across the membrane which is generated by electron transport complexes of the respiratory chain. F-type ATP synthases consist of two structural domains, F(1) - containing the extramembraneous catalytic core, and F(0) - containing the membrane proton channel, linked together by a central stalk and a peripheral stalk. During catalysis, ATP synthesis in the catalytic domain of F(1) is coupled via a rotary mechanism of the central stalk subunits to proton translocation. Key component of the proton channel; it may play a direct role in the translocation of protons across the membrane. This chain is ATP synthase subunit a, found in Yarrowia lipolytica (strain CLIB 122 / E 150) (Yeast).